A 151-amino-acid polypeptide reads, in one-letter code: Deoxyuridine 5'-triphosphate nucleotidohydrolase (151 aa).

Substrate contacts are provided by residues Arg70–Gly72, Asn83, and Thr87–Asp89.

It belongs to the dUTPase family. It depends on Mg(2+) as a cofactor.

It catalyses the reaction dUTP + H2O = dUMP + diphosphate + H(+). Its pathway is pyrimidine metabolism; dUMP biosynthesis; dUMP from dCTP (dUTP route): step 2/2. Its function is as follows. This enzyme is involved in nucleotide metabolism: it produces dUMP, the immediate precursor of thymidine nucleotides and it decreases the intracellular concentration of dUTP so that uracil cannot be incorporated into DNA. The chain is Deoxyuridine 5'-triphosphate nucleotidohydrolase from Ruegeria pomeroyi (strain ATCC 700808 / DSM 15171 / DSS-3) (Silicibacter pomeroyi).